The chain runs to 48 residues: M-oxotoxin-Ot1a (48 aa).

Expressed by the venom gland.

It is found in the secreted. Its subcellular location is the target cell membrane. In terms of biological role, disrupts cell membranes, particularly those rich in phosphocholine, through formation of pores. Has antimicrobial activity against Gram-negative bacterium E.coli, Gram-positive bacteria B.subtilis and S.aureus, and hemolytic activity against sheep, pig and guinea pig erythrocytes. Has insecticidal activity against S.frugiperda ovarian cells by opening non-selective ion channels. Enhances the insecticidal activity of spider venom neurotoxic peptides. The protein is M-oxotoxin-Ot1a of Oxyopes takobius (Lynx spider).